We begin with the raw amino-acid sequence, 502 residues long: NAD(P)H-quinone oxidoreductase chain 4, chloroplastic (502 aa).

14 consecutive transmembrane segments (helical) span residues 4–24 (FPWL…IFFF), 37–57 (ICIC…HFQL), 87–107 (VGPI…AWPV), 113–130 (LFHF…GLFS), 134–154 (LLLF…LLSM), 167–187 (FILY…GMGL), 208–228 (ALEI…LPII), 242–262 (HYST…YGLV), 272–292 (AHSI…IYAA), 305–325 (IAYS…SITD), 330–350 (GAIL…FLAG), 374–396 (IFTM…GFAA), 416–436 (ILIT…SLSM), and 464–484 (LFVS…PDFV).

This sequence belongs to the complex I subunit 4 family.

The protein localises to the plastid. It localises to the chloroplast thylakoid membrane. It catalyses the reaction a plastoquinone + NADH + (n+1) H(+)(in) = a plastoquinol + NAD(+) + n H(+)(out). The enzyme catalyses a plastoquinone + NADPH + (n+1) H(+)(in) = a plastoquinol + NADP(+) + n H(+)(out). The protein is NAD(P)H-quinone oxidoreductase chain 4, chloroplastic of Ranunculus macranthus (Large buttercup).